The chain runs to 591 residues: Aspartate--tRNA(Asp/Asn) ligase (591 aa).

An L-aspartate-binding site is contributed by E176. Residues 200-203 (QLFK) are aspartate. Residue R222 participates in L-aspartate binding. ATP contacts are provided by residues 222 to 224 (RDE) and Q231. H450 contacts L-aspartate. E484 is an ATP binding site. L-aspartate is bound at residue R491. 536-539 (GLDR) is an ATP binding site.

This sequence belongs to the class-II aminoacyl-tRNA synthetase family. Type 1 subfamily. Homodimer.

It localises to the cytoplasm. The catalysed reaction is tRNA(Asx) + L-aspartate + ATP = L-aspartyl-tRNA(Asx) + AMP + diphosphate. In terms of biological role, aspartyl-tRNA synthetase with relaxed tRNA specificity since it is able to aspartylate not only its cognate tRNA(Asp) but also tRNA(Asn). Reaction proceeds in two steps: L-aspartate is first activated by ATP to form Asp-AMP and then transferred to the acceptor end of tRNA(Asp/Asn). This Bacillus anthracis (strain A0248) protein is Aspartate--tRNA(Asp/Asn) ligase.